The sequence spans 2422 residues: Non-reducing polyketide synthase trt4 (2422 aa).

Positions Val14–Gln196 are N-terminal acylcarrier protein transacylase domain (SAT). The segment at Val289 to Thr314 is disordered. Over residues Asn297 to Pro312 the composition is skewed to polar residues. Residues Thr329–Glu745 form the Ketosynthase family 3 (KS3) domain. Active-site for beta-ketoacyl synthase activity residues include Cys494, His629, and His668. The tract at residues Leu856–Ala1121 is malonyl-CoA:ACP transacylase (MAT) domain. The For acyl/malonyl transferase activity role is filled by Ser904. Residues Pro1190–Asn1316 form an N-terminal hotdog fold region. The PKS/mFAS DH domain maps to Pro1190–Lys1495. A product template (PT) domain region spans residues Ser1191–Leu1494. Catalysis depends on His1221, which acts as the Proton acceptor; for dehydratase activity. The segment at Ser1345–Lys1495 is C-terminal hotdog fold. The Proton donor; for dehydratase activity role is filled by Asp1402. The 78-residue stretch at Ser1535 to Gly1612 folds into the Carrier domain. At Ser1572 the chain carries O-(pantetheine 4'-phosphoryl)serine. The disordered stretch occupies residues Ala1615 to Pro1636. Residues Gln1774 to Asn2007 form a methyltransferase (CMeT) domain region. Positions Asn2036–Tyr2383 are thioesterase (TE) domain. Residues Ser2159, Asp2320, and His2352 each act as for thioesterase activity in the active site.

It catalyses the reaction 3 malonyl-CoA + acetyl-CoA + 2 S-adenosyl-L-methionine = 3,5-dimethylorsellinate + 2 S-adenosyl-L-homocysteine + 3 CO2 + 4 CoA. Its pathway is secondary metabolite biosynthesis; terpenoid biosynthesis. In terms of biological role, non-reducing polyketide synthase; part of the gene cluster that mediates the biosynthesis of terretonin, a fungal meroterpenoid that acts as a mycotoxin. The first step of the pathway is the synthesis of 3,5-dimethylorsellinic acid (DMOA) by the polyketide synthase trt4. DMOA is then prenylated into farnesyl-DMOA by the polyprenyl transferase trt2. Methylation by the methyltransferase trt5 then leads to farnesyl-DMOA methyl ester which is further subject to epoxidation by the FAD-dependent monooxygenase trt8 to yield epoxyfarnesyl-DMOA methyl ester. Cyclization of epoxyfarnesyl-DMOA methyl ester by the terpene cyclase trt1 leads to a tetracycle intermediate which is in turn converted to preterretonin. Dehydrogenase trt9 comes next to transform preterretonin to preterrenoid. The FAD-dependent monooxygenase trt3 is then required for the C-hydroxylation at C16 of preterrenoid to yield terrenoid. The cytochrome P450 trt6 catalyzes three successive oxidations to transform terrenoid into an unstable intermediate, which then undergoes the D-ring expansion and unusual rearrangement of the methoxy group to afford the core skeleton of terretonin. Trt14 catalyzes the D-ring expansion of terretonin involving intramolecular methoxy rearrangement as well as the hydrolysis of the expanded D-ring and the methyl ester moiety. Finally, the nonheme iron-dependent dioxygenase trt7 accomplishes the last two oxidation reactions steps to complete the biosynthesis of terretonin. Terretonin C is produced via spontaneous decarboxylation of the terretonin precursor. Another shunt product of the terretonin biosynthesis is dihydrofarnesyl-DMOA, derived from epoxyfarnesyl-DMOA through hydrolysis of the epoxide. The sequence is that of Non-reducing polyketide synthase trt4 from Aspergillus terreus (strain NIH 2624 / FGSC A1156).